Reading from the N-terminus, the 299-residue chain is Protease HtpX homolog (299 aa).

Transmembrane regions (helical) follow at residues 15 to 35 (ILLL…GYLF) and 39 to 59 (GLGG…SMIF). Position 143 (histidine 143) interacts with Zn(2+). The active site involves glutamate 144. Zn(2+) is bound at residue histidine 147. The next 2 helical transmembrane spans lie at 158-178 (IAVA…RMMW) and 198-218 (IIML…ATLV). Glutamate 227 serves as a coordination point for Zn(2+).

This sequence belongs to the peptidase M48B family. It depends on Zn(2+) as a cofactor.

The protein resides in the cell membrane. This is Protease HtpX homolog from Streptococcus pneumoniae (strain Taiwan19F-14).